A 407-amino-acid chain; its full sequence is Geranylgeranyl diphosphate reductase (407 aa).

This sequence belongs to the geranylgeranyl reductase family. ChlP subfamily.

The catalysed reaction is phytyl diphosphate + 3 NADP(+) = geranylgeranyl diphosphate + 3 NADPH + 3 H(+). It participates in porphyrin-containing compound metabolism; chlorophyll biosynthesis. In terms of biological role, catalyzes the stepwise hydrogenation of geranylgeraniol to phytol during chlorophyll A (ChlA) biosynthesis. The polypeptide is Geranylgeranyl diphosphate reductase (chlP) (Synechocystis sp. (strain ATCC 27184 / PCC 6803 / Kazusa)).